We begin with the raw amino-acid sequence, 388 residues long: Probable pectin lyase F-1 (388 aa).

An N-terminal signal peptide occupies residues 1–19; it reads MKTATFSTLLALSASAVNA. The cysteines at positions 80 and 103 are disulfide-linked. N-linked (GlcNAc...) asparagine glycosylation occurs at Asn126. Residue Arg253 is part of the active site. A disulfide bridge links Cys328 with Cys336.

The protein belongs to the polysaccharide lyase 1 family.

It is found in the secreted. It catalyses the reaction Eliminative cleavage of (1-&gt;4)-alpha-D-galacturonan methyl ester to give oligosaccharides with 4-deoxy-6-O-methyl-alpha-D-galact-4-enuronosyl groups at their non-reducing ends.. Functionally, pectinolytic enzymes consist of four classes of enzymes: pectin lyase, polygalacturonase, pectin methylesterase and rhamnogalacturonase. Among pectinolytic enzymes, pectin lyase is the most important in depolymerization of pectin, since it cleaves internal glycosidic bonds of highly methylated pectins. In Aspergillus terreus (strain NIH 2624 / FGSC A1156), this protein is Probable pectin lyase F-1 (pelF-1).